A 259-amino-acid chain; its full sequence is MLMVISPAKTLDYETPPATPRFTQPEHLDHAQELIAQLRDFSPAQIAELMHLSDKLAGLNAARFGSWERPFNPSNAKQALLAFKGDVYTGLHAEDFSEDDFDFAQAHLRMLSGLYGVLRPLDLMQPYRLEMGTKLVNGRGKDLYAFWGERISAWLNQALAAQGDDVLLNLASNEYFGAVKRKALNARIIDTEFKDLKNGQYKIISFYAKKARGLMARYVIKERLTNPEGLKDFNYQGYRYSAEHSKADSLVFLRDQPLD.

This sequence belongs to the UPF0246 family.

This Ectopseudomonas mendocina (strain ymp) (Pseudomonas mendocina) protein is UPF0246 protein Pmen_1032.